A 495-amino-acid chain; its full sequence is Aspartyl/glutamyl-tRNA(Asn/Gln) amidotransferase subunit B (495 aa).

Belongs to the GatB/GatE family. GatB subfamily. In terms of assembly, heterotrimer of A, B and C subunits.

The catalysed reaction is L-glutamyl-tRNA(Gln) + L-glutamine + ATP + H2O = L-glutaminyl-tRNA(Gln) + L-glutamate + ADP + phosphate + H(+). The enzyme catalyses L-aspartyl-tRNA(Asn) + L-glutamine + ATP + H2O = L-asparaginyl-tRNA(Asn) + L-glutamate + ADP + phosphate + 2 H(+). Its function is as follows. Allows the formation of correctly charged Asn-tRNA(Asn) or Gln-tRNA(Gln) through the transamidation of misacylated Asp-tRNA(Asn) or Glu-tRNA(Gln) in organisms which lack either or both of asparaginyl-tRNA or glutaminyl-tRNA synthetases. The reaction takes place in the presence of glutamine and ATP through an activated phospho-Asp-tRNA(Asn) or phospho-Glu-tRNA(Gln). The protein is Aspartyl/glutamyl-tRNA(Asn/Gln) amidotransferase subunit B of Gloeothece citriformis (strain PCC 7424) (Cyanothece sp. (strain PCC 7424)).